An 81-amino-acid polypeptide reads, in one-letter code: U-poneritoxin(01)-Om6a (81 aa).

A signal peptide spans 1 to 21 (MRRSYVLLAFAIVLIISIISA). Residues 22-43 (QVEADASSDAFADAVADAVADP) constitute a propeptide that is removed on maturation. Ala-79 is subject to Alanine amide.

This sequence belongs to the formicidae venom precursor-01 superfamily. Truncated sequences of this peptide have also been found in the venom. It is possible they have been cleaved in the venom. In terms of tissue distribution, expressed by the venom gland.

The protein localises to the secreted. Cationic amphipathic alpha-helical peptide with antimicrobial activities against E.coli (MIC=3.1), and S.aureus (MIC=3.1 uM). Also shows histamine-releasing activity (33.6% at 10 uM). Does not have activity against S.cerevisiae. Does not show hemolytic activity, even at 50 uM. The sequence is that of U-poneritoxin(01)-Om6a from Odontomachus monticola (Trap-jaw ant).